The primary structure comprises 458 residues: MGSEPPSSPQVVEEGADEEDEELSGAEDADLRSSSGRGSLLTRRGITLRVLLKDGLVEPGDGVLSIHYLGKKFVGDLLNDGKIRWVETGQIFNSPSAWATHCKRLVNPAKKSGCGWASVRYRGQKLVQYKTTWLHKYQPSADMSLISEGEDDEMGDDDEEEGKTTIPVEDKNKKSKPELHEIGLTQRRDRERIPVRYCTLGTRDAARDPHTLVELSAFSAINRFQPFNVAVSSNVLLLMDFHCHLTSSEVVGYLGGRWDTNTQLLTVLRAFPCRTRLADKDAAPAVEEEICQNLFMRGLSLVGWYHSHPRGPALPSLQDIDSQMDHQLRLQGSSNGFQPCLGIICGPYYHGNQGVASTITPFWVVPPPEQRPNDHGIPVAVEVTYVQDNFLTTDVLNEMMLLVEFYRSAPDLVQFSQMWSPNTSILDKIKASLSGHAPKDQAYAQILEHVYNQLRNTQ.

Residues 1–37 are disordered; the sequence is MGSEPPSSPQVVEEGADEEDEELSGAEDADLRSSSGR. Residues 14–28 are compositionally biased toward acidic residues; sequence EGADEEDEELSGAED. The RAMA domain occupies 42 to 137; the sequence is TRRGITLRVL…QYKTTWLHKY (96 aa). Positions 94, 96, and 116 each coordinate DNA. The segment at 147–175 is disordered; it reads SEGEDDEMGDDDEEEGKTTIPVEDKNKKS. Over residues 148–161 the composition is skewed to acidic residues; that stretch reads EGEDDEMGDDDEEE. In terms of domain architecture, MPN spans 229-364; sequence VAVSSNVLLL…VASTITPFWV (136 aa). Residues His306, His308, and Asp319 each coordinate Zn(2+). Residues 306–319 carry the JAMM motif motif; that stretch reads HSHPRGPALPSLQD.

This sequence belongs to the peptidase M67 family. Degraded following binding to N(6)-methyladenosine methylated DNA (m6A).

Its function is as follows. Probable protease. Acts as a sensor of N(6)-methyladenosine methylation on DNA (m6A): recognizes and binds m6A DNA, leading to its degradation. Binds only double strand DNA (dsDNA) in a sequence-independent manner. This chain is MPN domain-containing protein, found in Danio rerio (Zebrafish).